Reading from the N-terminus, the 82-residue chain is uncharacterized protein (82 aa).

This is an uncharacterized protein from Ictalurid herpesvirus 1 (strain Auburn) (IcHV-1).